The following is a 782-amino-acid chain: DnaJ homolog subfamily C member 16 (782 aa).

The signal sequence occupies residues 1–25 (MEVRKLSISWQFLIVLVLILQILSA). At 26 to 535 (LDFDPYKVLG…DSIFHNNWRE (510 aa)) the chain is on the cytoplasmic side. Residues 29–93 (DPYKVLGVSR…EKRSNYDQYG (65 aa)) form the J domain. The Thioredoxin domain maps to 119–247 (FYFDESFFHF…LRQFVESLLP (129 aa)). The helical; Anchor for type IV membrane protein transmembrane segment at 536–556 (MMPLLSLIFSALFILFGTVIV) threads the bilayer. The Extracellular segment spans residues 557 to 782 (QAFSDSSDER…FYIPSWPELD (226 aa)). Residues 562-593 (SSDERESSPPDKEEAQEKTGKTEPSFTKENSS) are disordered. A compositionally biased stretch (basic and acidic residues) spans 563-582 (SDERESSPPDKEEAQEKTGK). Positions 583 to 593 (TEPSFTKENSS) are enriched in polar residues. N-linked (GlcNAc...) asparagine glycosylation is present at Asn-631.

Its subcellular location is the endoplasmic reticulum membrane. Functionally, plays an important role in regulating the size of autophagosomes during the formation process. The chain is DnaJ homolog subfamily C member 16 (DNAJC16) from Pongo abelii (Sumatran orangutan).